The primary structure comprises 589 residues: Alpha-1,2-mannosyltransferase MNN22 (589 aa).

Over 1–16 the chain is Cytoplasmic; the sequence is MGSIFKDGRRILVRPK. A helical membrane pass occupies residues 17-33; sequence SLIICLCLISIIFTQLI. Residues 34–589 lie on the Extracellular side of the membrane; it reads RYQYQLIADE…NTIAWLGKKT (556 aa). The segment at 50-77 is disordered; sequence EDHSSSQSLKNTKLNSTRSSSPISPPKS. Residues 54–71 are compositionally biased toward polar residues; it reads SSQSLKNTKLNSTRSSSP. Residues Asn-64, Asn-332, and Asn-530 are each glycosylated (N-linked (GlcNAc...) asparagine).

It belongs to the MNN1/MNT family.

The protein resides in the golgi apparatus membrane. The protein operates within protein modification; protein glycosylation. Alpha-1,2-mannosyltransferase required for cell wall integrity. Responsible for addition of the first alpha-1,2-linked mannose to form the branches on the mannan backbone of oligosaccharides. Addition of alpha-1,2-mannose is required for stabilization of the alpha-1,6-mannose backbone and hence regulates mannan fibril length; and is important for both immune recognition and virulence. This chain is Alpha-1,2-mannosyltransferase MNN22 (MNN22), found in Candida albicans (strain SC5314 / ATCC MYA-2876) (Yeast).